The chain runs to 180 residues: Signal peptidase complex subunit 2 (180 aa).

The Cytoplasmic portion of the chain corresponds to 1 to 45 (MTDEPVKVVNKWDGPTVKNALDEVVKKILNDKVGWTESHNLMNLR). A helical transmembrane segment spans residues 46-66 (LLISFIGVAFSAFACGYDYYE). The Lumenal portion of the chain corresponds to 67 to 72 (PFPKSK). A helical membrane pass occupies residues 73–93 (IVLAVCSVSYFICMGILQMYQ). At 94–180 (WYVEKDCIYE…LYNRLIRSEQ (87 aa)) the chain is on the cytoplasmic side.

This sequence belongs to the SPCS2 family. Component of the signal peptidase complex (SPC) composed of a catalytic subunit sec-11 and three accessory subunits spcs-1, spcs-2 and spcs-3. The complex induces a local thinning of the ER membrane which is used to measure the length of the signal peptide (SP) h-region of protein substrates. This ensures the selectivity of the complex towards h-regions shorter than 18-20 amino acids.

The protein localises to the endoplasmic reticulum membrane. Functionally, component of the signal peptidase complex (SPC) which catalyzes the cleavage of N-terminal signal sequences from nascent proteins as they are translocated into the lumen of the endoplasmic reticulum. Enhances the enzymatic activity of SPC and facilitates the interactions between different components of the translocation site. In Caenorhabditis elegans, this protein is Signal peptidase complex subunit 2.